A 335-amino-acid chain; its full sequence is NAC domain-containing protein 40 (335 aa).

The 143-residue stretch at 14 to 156 folds into the NAC domain; the sequence is LFPGFRFSPT…ALVVCRLRKN (143 aa). The DNA-binding element occupies 112-162; the sequence is VGTKRTLVFHIGRAPRGERTEWIMHEYCIHGAPQDALVVCRLRKNADFRAS. The span at 245 to 254 shows a compositional bias: polar residues; the sequence is PTNPTHQETI. Residues 245–267 are disordered; sequence PTNPTHQETISSESSSKRSKCGI. A helical membrane pass occupies residues 313–333; the sequence is VLATTVFLAILFSFFWTVLIA.

Proteolytically cleaved, probably by metalloprotease activity. This cleavage mediates a translocation from the plasma membrane to the nucleus. In terms of tissue distribution, expressed in seeds, leaves, roots and inflorescence. Expressed in roots, rosette leaves, cauline leaves, shoot apex, stems and flowers.

The protein localises to the cell membrane. It is found in the nucleus. In terms of biological role, transcriptional activator activated by proteolytic cleavage through regulated intramembrane proteolysis (RIP), probably via metalloprotease activity. Regulates gibberellic acid-mediated salt-responsive repression of seed germination and flowering via FT, thus delaying seed germination under high salinity conditions. The protein is NAC domain-containing protein 40 of Arabidopsis thaliana (Mouse-ear cress).